The primary structure comprises 129 residues: uncharacterized protein (129 aa).

The protein localises to the cytoplasm. The protein resides in the cytosol. It is found in the nucleus. This is an uncharacterized protein from Schizosaccharomyces pombe (strain 972 / ATCC 24843) (Fission yeast).